A 102-amino-acid chain; its full sequence is UPF0251 protein ASA_1331 (102 aa).

Belongs to the UPF0251 family.

The polypeptide is UPF0251 protein ASA_1331 (Aeromonas salmonicida (strain A449)).